The chain runs to 464 residues: Integrator complex subunit 12 (464 aa).

Residues 42-98 (GNDSVYRPQPKEVEQPKAMLSKVKPETKASSSTPSSSILSKPLASEKVKKEAEKRTA) are disordered. The segment covering 69–84 (KASSSTPSSSILSKPL) has biased composition (low complexity). Positions 85-98 (ASEKVKKEAEKRTA) are enriched in basic and acidic residues. The PHD-type zinc finger occupies 156-212 (GLACVVCRQMTVFSGNQLVECQECHNLYHQDCHRPQVTDKDVNDPRLVWYCARCTRQ). Disordered regions lie at residues 216–252 (MAQKNQKPSQKPAPSAVSAVTPVAKDPSVNKPELKSK) and 312–445 (TNSQ…SQLN). The span at 227 to 239 (PAPSAVSAVTPVA) shows a compositional bias: low complexity. The segment covering 312-329 (TNSQATSGKPPSLSSVQK) has biased composition (polar residues). The segment covering 339 to 371 (SKAGSVSKSGSGGSSSTIPLKPLPPLILGKTGL) has biased composition (low complexity). The segment covering 372-382 (SRSMSSDNVSK) has biased composition (polar residues). The span at 384–421 (GLPSPNPSSSGSVSSLSSQLGSNNGSSNTAGSNVNSSN) shows a compositional bias: low complexity. Residues 428–445 (SMQQSGAKGPTSQESQLN) show a composition bias toward polar residues.

The protein belongs to the Integrator subunit 12 family. Component of the Integrator complex, composed of core subunits INTS1, INTS2, INTS3, INTS4, INTS5, INTS6, INTS7, INTS8, INTS9/RC74, INTS10, INTS11/CPSF3L, INTS12, INTS13, INTS14 and INTS15. The core complex associates with protein phosphatase 2A subunits PPP2CA and PPP2R1A, to form the Integrator-PP2A (INTAC) complex.

The protein localises to the nucleus. Functionally, component of the integrator complex, a multiprotein complex that terminates RNA polymerase II (Pol II) transcription in the promoter-proximal region of genes. The integrator complex provides a quality checkpoint during transcription elongation by driving premature transcription termination of transcripts that are unfavorably configured for transcriptional elongation: the complex terminates transcription by (1) catalyzing dephosphorylation of the C-terminal domain (CTD) of Pol II subunit POLR2A/RPB1 and SUPT5H/SPT5, (2) degrading the exiting nascent RNA transcript via endonuclease activity and (3) promoting the release of Pol II from bound DNA. The integrator complex is also involved in terminating the synthesis of non-coding Pol II transcripts, such as enhancer RNAs (eRNAs), small nuclear RNAs (snRNAs), telomerase RNAs and long non-coding RNAs (lncRNAs). The chain is Integrator complex subunit 12 (ints12) from Xenopus laevis (African clawed frog).